Reading from the N-terminus, the 125-residue chain is Small ribosomal subunit protein bS6 (125 aa).

This sequence belongs to the bacterial ribosomal protein bS6 family.

Functionally, binds together with bS18 to 16S ribosomal RNA. This chain is Small ribosomal subunit protein bS6 (rpsF), found in Pasteurella multocida (strain Pm70).